Reading from the N-terminus, the 145-residue chain is Hemoglobin fetal subunit beta (145 aa).

A Globin domain is found at 1 to 145; that stretch reads MLTAEEKASV…VANALAHRYH (145 aa). Heme b contacts are provided by histidine 62 and histidine 91.

The protein belongs to the globin family. As to quaternary structure, heterotetramer of two alpha chains and two beta chains.

This is Hemoglobin fetal subunit beta from Ovis aries (Sheep).